We begin with the raw amino-acid sequence, 509 residues long: Carboxysome shell carbonic anhydrase (509 aa).

Cysteine 170 contributes to the Zn(2+) binding site. Aspartate 172 serves as the catalytic Proton acceptor. Residues histidine 238 and cysteine 249 each contribute to the Zn(2+) site.

It belongs to the beta-class carbonic anhydrase family. CsoSCA subfamily. In terms of assembly, homodimer. It depends on Zn(2+) as a cofactor.

The protein resides in the carboxysome. It carries out the reaction hydrogencarbonate + H(+) = CO2 + H2O. Reversible hydration of carbon dioxide. Essential for photosynthetic carbon dioxide fixation, supplies CO(2) to RuBisCO (ribulose bisphosphate carboxylase, cbbL-cbbS) in the carboxysome. There are estimated to be 29 CsoSCA oligomers per carboxysome. This chain is Carboxysome shell carbonic anhydrase, found in Prochlorococcus marinus subsp. pastoris (strain CCMP1986 / NIES-2087 / MED4).